A 185-amino-acid chain; its full sequence is Ribosome-recycling factor (185 aa).

Belongs to the RRF family.

The protein localises to the cytoplasm. Functionally, responsible for the release of ribosomes from messenger RNA at the termination of protein biosynthesis. May increase the efficiency of translation by recycling ribosomes from one round of translation to another. The protein is Ribosome-recycling factor of Macrococcus caseolyticus (strain JCSC5402) (Macrococcoides caseolyticum).